An 81-amino-acid chain; its full sequence is uncharacterized protein (81 aa).

The next 2 helical transmembrane spans lie at 10 to 30 and 56 to 76; these read FFVL…FLLL and VLYL…AFAI.

It localises to the host membrane. This is an uncharacterized protein from Acidianus two-tailed virus (ATV).